A 354-amino-acid chain; its full sequence is 3-dehydroquinate synthase (354 aa).

Residues 100-104 (GATGD), 124-125 (TT), lysine 136, lysine 145, and 163-166 (FLKT) each bind NAD(+). Residues glutamate 178, histidine 242, and histidine 256 each coordinate Zn(2+).

The protein belongs to the sugar phosphate cyclases superfamily. Dehydroquinate synthase family. The cofactor is NAD(+). Co(2+) is required as a cofactor. It depends on Zn(2+) as a cofactor.

The protein localises to the cytoplasm. It carries out the reaction 7-phospho-2-dehydro-3-deoxy-D-arabino-heptonate = 3-dehydroquinate + phosphate. It functions in the pathway metabolic intermediate biosynthesis; chorismate biosynthesis; chorismate from D-erythrose 4-phosphate and phosphoenolpyruvate: step 2/7. Its function is as follows. Catalyzes the conversion of 3-deoxy-D-arabino-heptulosonate 7-phosphate (DAHP) to dehydroquinate (DHQ). This chain is 3-dehydroquinate synthase, found in Staphylococcus aureus (strain MSSA476).